Consider the following 324-residue polypeptide: Adipolin (324 aa).

The first 24 residues, 1–24, serve as a signal peptide directing secretion; it reads MRCWVWLLVAIVLCQQLSVVRVLA. 2 disordered regions span residues 28 to 66 and 83 to 121; these read ERKKGKDPHQFTEPFNVSLSNSEELHETDKLSETPDPGL and GANSKKKCKGKDKKLRGLFGPPGPPGPQGPPGPPGMPGA. Residues 40–49 show a composition bias toward polar residues; the sequence is EPFNVSLSNS. Asn-43 carries N-linked (GlcNAc...) asparagine glycosylation. Basic and acidic residues predominate over residues 50–60; sequence EELHETDKLSE. Residues 86-98 show a composition bias toward basic residues; sequence SKKKCKGKDKKLR. Positions 103–118 are enriched in pro residues; that stretch reads PPGPPGPQGPPGPPGM. The 156-residue stretch at 169–324 folds into the C1q domain; sequence YRRVDEGFHC…SDFMGILMGL (156 aa).

It belongs to the adipolin/erythroferrone family. In terms of assembly, homomultimer; disulfide-linked.

The protein localises to the secreted. Functionally, insulin-sensitizing adipocyte-secreted protein (adipokine) that regulates glucose metabolism in liver and adipose tissue. The protein is Adipolin (c1qtnf12) of Xenopus tropicalis (Western clawed frog).